Here is a 229-residue protein sequence, read N- to C-terminus: Uracil-DNA glycosylase (229 aa).

Asp65 functions as the Proton acceptor in the catalytic mechanism.

It belongs to the uracil-DNA glycosylase (UDG) superfamily. UNG family.

The protein resides in the cytoplasm. It carries out the reaction Hydrolyzes single-stranded DNA or mismatched double-stranded DNA and polynucleotides, releasing free uracil.. Its function is as follows. Excises uracil residues from the DNA which can arise as a result of misincorporation of dUMP residues by DNA polymerase or due to deamination of cytosine. This Latilactobacillus sakei subsp. sakei (strain 23K) (Lactobacillus sakei subsp. sakei) protein is Uracil-DNA glycosylase.